We begin with the raw amino-acid sequence, 331 residues long: Ketol-acid reductoisomerase (NADP(+)) (331 aa).

The region spanning 2–182 is the KARI N-terminal Rossmann domain; sequence AKLFYDSDAD…GGTRAGILET (181 aa). NADP(+)-binding positions include 25–28, Ser-51, Ser-53, and 83–86; these read YGSQ and DEFQ. The active site involves His-108. Position 134 (Gly-134) interacts with NADP(+). The KARI C-terminal knotted domain maps to 183-328; the sequence is NFKEETETDL…KTLRSMFSWL (146 aa). 4 residues coordinate Mg(2+): Asp-191, Glu-195, Glu-227, and Glu-231. Position 252 (Ser-252) interacts with substrate.

The protein belongs to the ketol-acid reductoisomerase family. It depends on Mg(2+) as a cofactor.

It catalyses the reaction (2R)-2,3-dihydroxy-3-methylbutanoate + NADP(+) = (2S)-2-acetolactate + NADPH + H(+). The catalysed reaction is (2R,3R)-2,3-dihydroxy-3-methylpentanoate + NADP(+) = (S)-2-ethyl-2-hydroxy-3-oxobutanoate + NADPH + H(+). It functions in the pathway amino-acid biosynthesis; L-isoleucine biosynthesis; L-isoleucine from 2-oxobutanoate: step 2/4. It participates in amino-acid biosynthesis; L-valine biosynthesis; L-valine from pyruvate: step 2/4. In terms of biological role, involved in the biosynthesis of branched-chain amino acids (BCAA). Catalyzes an alkyl-migration followed by a ketol-acid reduction of (S)-2-acetolactate (S2AL) to yield (R)-2,3-dihydroxy-isovalerate. In the isomerase reaction, S2AL is rearranged via a Mg-dependent methyl migration to produce 3-hydroxy-3-methyl-2-ketobutyrate (HMKB). In the reductase reaction, this 2-ketoacid undergoes a metal-dependent reduction by NADPH to yield (R)-2,3-dihydroxy-isovalerate. This is Ketol-acid reductoisomerase (NADP(+)) from Prochlorococcus marinus (strain NATL2A).